The sequence spans 316 residues: ATP synthase gamma chain (316 aa).

This sequence belongs to the ATPase gamma chain family. As to quaternary structure, F-type ATPases have 2 components, CF(1) - the catalytic core - and CF(0) - the membrane proton channel. CF(1) has five subunits: alpha(3), beta(3), gamma(1), delta(1), epsilon(1). CF(0) has three main subunits: a, b and c.

The protein resides in the cellular thylakoid membrane. Produces ATP from ADP in the presence of a proton gradient across the membrane. The gamma chain is believed to be important in regulating ATPase activity and the flow of protons through the CF(0) complex. This is ATP synthase gamma chain from Prochlorococcus marinus (strain MIT 9301).